Here is a 636-residue protein sequence, read N- to C-terminus: Multicopper oxidase CTB12 (636 aa).

A signal peptide spans Met1–Ala23. Positions Ala62–Asp168 constitute a Plastocyanin-like 1 domain. Cu cation is bound by residues His104 and His106. N-linked (GlcNAc...) asparagine glycosylation occurs at Asn136. 2 residues coordinate Cu cation: His148 and His150. N-linked (GlcNAc...) asparagine glycosylation occurs at Asn304. The 64-residue stretch at Leu318–Val381 folds into the Plastocyanin-like 2 domain. N-linked (GlcNAc...) asparagine glycosylation is present at Asn472. The 128-residue stretch at Asn486–Gly613 folds into the Plastocyanin-like 3 domain. Positions 519, 522, and 524 each coordinate Cu cation. Asn576 is a glycosylation site (N-linked (GlcNAc...) asparagine). Cu cation contacts are provided by His595, Cys596, His597, and His601.

The protein belongs to the multicopper oxidase family.

It participates in mycotoxin biosynthesis. Its function is as follows. Multicopper oxidase; part of the gene cluster that mediates the biosynthesis of cercosporin, a light-activated, non-host-selective toxin. The perylenequinone chromophore of cercosporin absorbs light energy to attain an electronically-activated triplet state and produces active oxygen species such as the hydroxyl radical, superoxide, hydrogen peroxide or singlet oxygen upon reaction with oxygen molecules. These reactive oxygen species cause damage to various cellular components including lipids, proteins and nucleic acids. The first step of cercosporin biosynthesis is performed by the polyketide synthase CTB1 which catalyzes the formation of nor-toralactone. The starter unit acyltransferase (SAT) domain of CTB1 initiates polyketide extension by the selective utilization of acetyl-CoA, which is elongated to the heptaketide in the beta-ketoacyl synthase (KS) domain by successive condensations with six malonyl units introduced by the malonyl acyltransferase (MAT) domain. The product template (PT) domain catalyzes C4-C9 and C2-C11 aldol cyclizations and dehydrations to a trihydroxynaphthalene, which is thought to be delivered to the thioesterase (TE) domain for product release. The bifunctional enzyme CTB3 then methylates nor-toralactone to toralactone before conducting an unusual oxidative aromatic ring opening. The O-methyltransferase CTB2 further methylates the nascent OH-6 of the CBT3 product, blocking further oxidation at this site before the reductase CTB6 reduces the 2-oxopropyl ketone at position C7, giving naphthalene. The FAD-dependent monooxygenase CTB5 in concert with the multicopper oxidase CTB12 are responsible for homodimerization of naphthalene with CTB7 installing the dioxepine moiety, finally producing cercosporin. The fasciclin domain-containing protein CTB11 might act with CTB5 and CTB12 whereas the roles of CTB9 and CTB10 have still to be elucidated. The polypeptide is Multicopper oxidase CTB12 (Cercospora beticola (Sugarbeet leaf spot fungus)).